The sequence spans 535 residues: Probable C4-dicarboxylate sensor kinase (535 aa).

Topologically, residues 1 to 11 (MNKKKLSIRWK) are cytoplasmic. Residues 12–32 (ITILSYILVIFSFLIGGIVLI) traverse the membrane as a helical segment. The Extracellular portion of the chain corresponds to 33 to 172 (GNIQHTEERE…IADILLHLKR (140 aa)). A helical transmembrane segment spans residues 173-193 (DIAFIVVLTLGFGLAGSFLLA). Residues 194 to 535 (RHIKKQMFQL…MKGEEAQHGS (342 aa)) are Cytoplasmic-facing. The region spanning 213 to 276 (EERTATFHSM…PEIVERNKAV (64 aa)) is the PAS domain. The 196-residue stretch at 333–528 (VQNHEHMNKL…SFSIVFPMKG (196 aa)) folds into the Histidine kinase domain. H336 carries the post-translational modification Phosphohistidine; by autocatalysis.

It localises to the cell membrane. It catalyses the reaction ATP + protein L-histidine = ADP + protein N-phospho-L-histidine.. Its function is as follows. Member of the two-component regulatory system DctS/DctR. Probably activates DctR by phosphorylation. Essential for expression of dctP. The sequence is that of Probable C4-dicarboxylate sensor kinase (dctS) from Bacillus subtilis (strain 168).